The primary structure comprises 251 residues: 2-amino-5-chloromuconate deaminase (251 aa).

Monomer.

It catalyses the reaction (2Z,4E)-2-aminomuconate + H2O = (2Z,4E)-2-hydroxyhexa-2,4-dienedioate + NH4(+). It participates in xenobiotic degradation; 4-chloronitrobenzene degradation. It functions in the pathway xenobiotic degradation; nitrobenzene degradation. Its activity is regulated as follows. Cysteine residue modifying agents such as p-chloromercuribenzoate and the SH-binding metals Zn(2+), Ni(2+) and Cu(2+) completely inhibit deaminase activity, whereas Ca(2+), Mg(2+) and the histidine residue-modifying agent diethyl pyrocarbonate inhibit the activity by 23 to 50%. In terms of biological role, involved in the biodegradation of xenobiotic compounds, such as nitrobenzene and 4-chloronitrobenzene (4-CNB). CnbZ preferentially catalyzes the deamination of 2-amino-5-chloromuconate (2A5CM) to yield 2-hydroxy-5-chloromuconate (2H5CM). Also able to catalyze the deamination of 2-aminomuconate to yield 2-hydroxymuconate, which spontaneously converts into its keto form, 2-oxalocrotonate. The protein is 2-amino-5-chloromuconate deaminase of Comamonas testosteroni (Pseudomonas testosteroni).